The primary structure comprises 384 residues: Probable protein phosphatase 2C 42 (384 aa).

A PPM-type phosphatase domain is found at 58-358 (DFSMAVIQAN…DDITVIVVFL (301 aa)). D89, G90, D290, and D349 together coordinate Mn(2+).

It belongs to the PP2C family. Mg(2+) is required as a cofactor. Requires Mn(2+) as cofactor.

The catalysed reaction is O-phospho-L-seryl-[protein] + H2O = L-seryl-[protein] + phosphate. It catalyses the reaction O-phospho-L-threonyl-[protein] + H2O = L-threonyl-[protein] + phosphate. Dephosphorylates and represses plasma membrane H(+)-ATPases (PM H(+)-ATPases, e.g. AHA1 and AHA2), thus influencing negatively plant growth and fitness. Promotes the apical hook maintenance of etiolated seedlings. The polypeptide is Probable protein phosphatase 2C 42 (Arabidopsis thaliana (Mouse-ear cress)).